Here is a 530-residue protein sequence, read N- to C-terminus: Potassium voltage-gated channel subfamily A member 6 (530 aa).

The segment at 1-35 (MRSEKSLTLAAPGEVRGPEGEQQDAGEFQEAEGGG) is disordered. At Ser-3 the chain carries Phosphoserine. A compositionally biased stretch (acidic residues) spans 21–30 (EQQDAGEFQE). Residues 172–193 (PARGIAIVSVLVILISIVIFCL) form a helical membrane-spanning segment. Positions 203-239 (GRGGSNEGSGTRMSPASRGSHEEEDEDEDSYAFPGSI) are disordered. A Phosphoserine; by CK2 modification is found at Ser-222. A helical transmembrane segment spans residues 264 to 285 (FFLVETLCIVWFTFELLVRFSA). Cys-286 carries S-palmitoyl cysteine lipidation. A helical membrane pass occupies residues 297-317 (MNIIDLVAIFPYFITLGTELV). The helical; Voltage-sensor transmembrane segment at 339-359 (LAILRVIRLVRVFRIFKLSRH) threads the bilayer. Residues 361–374 (KGLQILGKTLQASM) form an S4-S5 linker region. Residues 375 to 396 (RELGLLIFFLFIGVILFSSAVY) traverse the membrane as a helical segment. Positions 411–422 (PDAFWWAVVTMT) form an intramembrane region, helical. Residues 423 to 428 (TVGYGD) carry the Selectivity filter motif. The stretch at 423–430 (TVGYGDMY) is an intramembrane region. Residues 438–466 (IVGSLCAIAGVLTIALPVPVIVSNFNYFY) traverse the membrane as a helical segment. Ser-512 is modified (phosphoserine; by PKA). The short motif at 527 to 529 (LTE) is the PDZ-binding element. Residue Thr-528 is modified to Phosphothreonine; by PKA.

The protein belongs to the potassium channel family. A (Shaker) (TC 1.A.1.2) subfamily. Kv1.6/KCNA6 sub-subfamily. As to quaternary structure, homotetramer and heterotetramer of potassium channel proteins. Interacts with KCNAB1 and KCNAB2.

The protein resides in the cell membrane. It carries out the reaction K(+)(in) = K(+)(out). In terms of biological role, voltage-gated potassium channel that mediates transmembrane potassium transport in excitable membranes. Forms tetrameric potassium-selective channels through which potassium ions pass in accordance with their electrochemical gradient. The channel alternates between opened and closed conformations in response to the voltage difference across the membrane. Can form functional homotetrameric channels and heterotetrameric channels that contain variable proportions of KCNA1, KCNA2, KCNA4, KNCA5, KCNA6, and possibly other family members as well; channel properties depend on the type of alpha subunits that are part of the channel. Channel properties are modulated by cytoplasmic beta subunits that regulate the subcellular location of the alpha subunits and promote rapid inactivation. Homotetrameric channels display rapid activation and slow inactivation. The chain is Potassium voltage-gated channel subfamily A member 6 (Kcna6) from Rattus norvegicus (Rat).